The sequence spans 183 residues: Ribonuclease M5 (183 aa).

The 85-residue stretch at 6–90 (KEVIVVEGKD…AYISRVSGTK (85 aa)) folds into the Toprim domain. Residues Glu12, Asp59, and Asp61 each contribute to the Mg(2+) site.

This sequence belongs to the ribonuclease M5 family. Mg(2+) serves as cofactor.

The protein localises to the cytoplasm. The enzyme catalyses Endonucleolytic cleavage of RNA, removing 21 and 42 nucleotides, respectively, from the 5'- and 3'-termini of a 5S-rRNA precursor.. Functionally, required for correct processing of both the 5' and 3' ends of 5S rRNA precursor. Cleaves both sides of a double-stranded region yielding mature 5S rRNA in one step. In Fusobacterium nucleatum subsp. nucleatum (strain ATCC 25586 / DSM 15643 / BCRC 10681 / CIP 101130 / JCM 8532 / KCTC 2640 / LMG 13131 / VPI 4355), this protein is Ribonuclease M5.